The chain runs to 115 residues: Large ribosomal subunit protein bL20c (115 aa).

Belongs to the bacterial ribosomal protein bL20 family.

Its subcellular location is the plastid. It is found in the chloroplast. Functionally, binds directly to 23S ribosomal RNA and is necessary for the in vitro assembly process of the 50S ribosomal subunit. It is not involved in the protein synthesizing functions of that subunit. The polypeptide is Large ribosomal subunit protein bL20c (Emiliania huxleyi (Coccolithophore)).